A 201-amino-acid chain; its full sequence is Dermatopontin (201 aa).

Residues 1-18 (MDLSLLWVLLPLVTMAWG) form the signal peptide. Gln19 carries the pyrrolidone carboxylic acid modification. Tyr23 bears the Sulfotyrosine mark. A run of 4 repeats spans residues 26 to 79 (PYQQ…ACMP), 70 to 75 (DRQWNY), 80 to 135 (TPQS…CCRY), and 125 to 130 (DREWQF). Residues 26–186 (PYQQYHDYSD…AVERDRQWKF (161 aa)) form a 2 X 53-55 AA tandem repeats region. 5 disulfide bridges follow: Cys50/Cys77, Cys90/Cys132, Cys106/Cys133, Cys139/Cys196, and Cys143/Cys189. A 3 X 6 AA repeats of D-R-[EQ]-W-[NQK]-[FY] region spans residues 70-186 (DRQWNYACMP…AVERDRQWKF (117 aa)). Sulfotyrosine occurs at positions 162, 164, 166, and 167. Residues 181 to 186 (DRQWKF) form a 3-3 repeat. Tyr194 carries the sulfotyrosine modification.

The protein belongs to the dermatopontin family. In terms of assembly, interacts with TGFB1, DCN and collagen. Post-translationally, sulfated on tyrosine residue(s). As to expression, expressed in fibroblasts, heart, skeletal muscle, brain and pancreas. Expressed at an intermediate level in lung and kidney, and at a low level in liver and placenta. Expressed at a lower level in fibroblasts from hypertrophic scar lesional skin and in fibroblasts from patients with systemic sclerosis than in normal skin fibroblasts.

The protein localises to the secreted. The protein resides in the extracellular space. It localises to the extracellular matrix. Seems to mediate adhesion by cell surface integrin binding. May serve as a communication link between the dermal fibroblast cell surface and its extracellular matrix environment. Enhances TGFB1 activity. Inhibits cell proliferation. Accelerates collagen fibril formation, and stabilizes collagen fibrils against low-temperature dissociation. This is Dermatopontin (DPT) from Homo sapiens (Human).